The chain runs to 398 residues: Succinyl-diaminopimelate desuccinylase (398 aa).

H73 lines the Zn(2+) pocket. D75 is an active-site residue. D106 provides a ligand contact to Zn(2+). The active-site Proton acceptor is the E140. 3 residues coordinate Zn(2+): E141, E169, and H366.

Belongs to the peptidase M20A family. DapE subfamily. Homodimer. Zn(2+) is required as a cofactor. It depends on Co(2+) as a cofactor.

The enzyme catalyses N-succinyl-(2S,6S)-2,6-diaminopimelate + H2O = (2S,6S)-2,6-diaminopimelate + succinate. It participates in amino-acid biosynthesis; L-lysine biosynthesis via DAP pathway; LL-2,6-diaminopimelate from (S)-tetrahydrodipicolinate (succinylase route): step 3/3. Catalyzes the hydrolysis of N-succinyl-L,L-diaminopimelic acid (SDAP), forming succinate and LL-2,6-diaminopimelate (DAP), an intermediate involved in the bacterial biosynthesis of lysine and meso-diaminopimelic acid, an essential component of bacterial cell walls. The sequence is that of Succinyl-diaminopimelate desuccinylase from Agrobacterium fabrum (strain C58 / ATCC 33970) (Agrobacterium tumefaciens (strain C58)).